The following is a 206-amino-acid chain: IMPACT family member HI_0722 (206 aa).

This sequence belongs to the IMPACT family.

This is IMPACT family member HI_0722 from Haemophilus influenzae (strain ATCC 51907 / DSM 11121 / KW20 / Rd).